The primary structure comprises 209 residues: Uracil phosphoribosyltransferase (209 aa).

5-phospho-alpha-D-ribose 1-diphosphate-binding positions include arginine 79, arginine 104, and 131-139; that span reads DPMLATGGS. Uracil-binding positions include isoleucine 194 and 199–201; that span reads GDA. Aspartate 200 serves as a coordination point for 5-phospho-alpha-D-ribose 1-diphosphate.

The protein belongs to the UPRTase family. Mg(2+) serves as cofactor.

The enzyme catalyses UMP + diphosphate = 5-phospho-alpha-D-ribose 1-diphosphate + uracil. It functions in the pathway pyrimidine metabolism; UMP biosynthesis via salvage pathway; UMP from uracil: step 1/1. Its activity is regulated as follows. Allosterically activated by GTP. Its function is as follows. Catalyzes the conversion of uracil and 5-phospho-alpha-D-ribose 1-diphosphate (PRPP) to UMP and diphosphate. The sequence is that of Uracil phosphoribosyltransferase from Halalkalibacterium halodurans (strain ATCC BAA-125 / DSM 18197 / FERM 7344 / JCM 9153 / C-125) (Bacillus halodurans).